A 95-amino-acid polypeptide reads, in one-letter code: Histone-like DNA-binding protein (95 aa).

It belongs to the bacterial histone-like protein family.

The sequence is that of Histone-like DNA-binding protein from Rickettsia felis (strain ATCC VR-1525 / URRWXCal2) (Rickettsia azadi).